The sequence spans 50 residues: Large ribosomal subunit protein bL33A (50 aa).

The protein belongs to the bacterial ribosomal protein bL33 family.

In Streptococcus thermophilus (strain CNRZ 1066), this protein is Large ribosomal subunit protein bL33A.